Consider the following 864-residue polypeptide: E3 ubiquitin-protein ligase Itchy (864 aa).

Positions 1 to 115 constitute a C2 domain; that stretch reads MSDSGPQLDS…LKSNNMKLEE (115 aa). At Ser2 the chain carries N-acetylserine. Residues 151–164 are compositionally biased toward polar residues; it reads NGETSCSESTTQND. The segment at 151–294 is disordered; that stretch reads NGETSCSEST…SQAPLPPGWE (144 aa). Basic and acidic residues predominate over residues 165–174; it reads DGCRTRDDTR. Over residues 195–206 the composition is skewed to low complexity; the sequence is NGNNSPSLSNGG. Ser199 is modified (phosphoserine; by MAPK8). Residues 210–224 show a composition bias toward pro residues; that stretch reads SRPPRPSRPPPPTPR. Residue Thr222 is modified to Phosphothreonine; by MAPK8. A compositionally biased stretch (low complexity) spans 230-259; sequence NGSPSTNSDSDGSSTGSLPPTNTNVNTSTS. A Phosphoserine; by MAPK8 modification is found at Ser232. WW domains follow at residues 287–320 and 319–352; these read APLP…RPEP and EPLP…RPTL. The residue at position 346 (Thr346) is a Phosphothreonine; by SGK3. Residues 356 to 432 form a required for interaction with FYN region; it reads RNYEQWQLQR…RITQWEDPRS (77 aa). Residue Tyr381 is modified to Phosphotyrosine; by FYN. WW domains are found at residues 399-432 and 439-472; these read GPLP…DPRS and KPLP…DPRT. Ser411 carries the phosphoserine; by SGK3 modification. The region spanning 530–864 is the HECT domain; the sequence is SPQDLRRRLW…IEETEGFGQE (335 aa). The MAP kinase docking site stretch occupies residues 535-544; it reads RRRLWVIFPG. Cys832 serves as the catalytic Glycyl thioester intermediate.

As to quaternary structure, monomer. Part of a ternary complex composed of SMAD3, ITCH/AIP4 and NEDD9/HEF1; within the complex NEDD9/HEF1 interacts (via N-terminus) with ITCH/AIP4 (via WW domains); the complex mediates ubiquitination and proteasomal degradation of NEDD9/HEF1. Interacts (via WW domains) with OCNL. Interacts (via WW domains) with NOTCH1. Interacts (via WW domains) JUN. Interacts with JUNB; the interaction promotes ITCH-mediated ubiquitination and degradation of JUNB. Interacts with FYN; the interaction phosphorylates ITCH on Tyr-381 decreasing binding of JUNB. Interacts (via WW domain 2) with N4BP1; the interaction inhibits the E3 ubiquitin-protein ligase activity. Interacts with NDFIP1 and NDFIP2; the interaction with NDFIP proteins activates the E3 ubiquitin-protein ligase and may induce its recruitment to exosomes. Interacts with ARHGEF7. Interacts with RNF11. Interacts (via the WW 1 domain) with NFE2 (via the PXY motif 1); the interaction promotes 'Lys-63'-linked ubiquitination of NFE2, retains it in the cytoplasm and prevents its transactivation activity. Interacts (via WW domains) with CXCR4 (via C-terminus); the interaction depends on CXCR4 phosphorylation. Found in a complex with E3 ligase DTX3L and ESCRT-0 components HGS and STAM. Interacts with DTX3L (via C-terminus); the interaction is increased upon CXCL12 stimulation and inhibits ITCH catalytic activity (the interaction is direct). Interacts with HGS. Interacts (via WW domains) with PCBP2 within a complex containing ITCH, MAVS and PCBP2. Interacts (via WW domains) with TXNIP (via C-terminus). Interacts with p15 BID. Interacts with ERBB4. Interacts with DTX1. Interacts with SPART. Interacts with SNX9 and SNX18. Interacts (via its WW domains) with ATN1. Interacts (via WW domains) with SGK3. Interacts with CBLC. Interacts with OTUD7B. Interacts (via WW domain 1,2 and 3) with PI4K2A; the interaction inhibits PI4K2A catalytic activity and promotes ITCH catalytic activity. Interacts with ARRDC4. Part of a complex containing ITCH, NDFIP1 and MAP3K7. Interacts with UBE2L3; the interaction is mediated by NDFIP1. Interacts with MAPK8/JNK1. Interacts (via WW domains) with ARRDC1 (via PPxY motifs); the interaction is direct and participates in the recruitment of the ubiquitin-protein ligase ITCH to the NOTCH1 receptor. Interacts (via WW domains) with ARRDC2. Interacts (via WW domains) with ARRDC3. Interacts directly with LDLRAD3; this interaction promotes ITCH auto-ubiquitination leading to its degradation. Interacts with ENTREP1; enhances the ubiquitination of CXCR4 by ITCH and its subsequent endocytosis. Interacts with USP12 and WDR48/UAF1; the interaction is more efficient when both USP12 and WDR48/UAF1 are involved and may facilitate the recruitment of the USP12 deubiquitinase complex to Notch. In terms of assembly, (Microbial infection) Interacts with Epstein-Barr virus LMP2A. In terms of processing, on T-cell activation, phosphorylation by the JNK cascade on serine and threonine residues surrounding the PRR domain accelerates the ubiquitination and degradation of JUN and JUNB. The increased ITCH catalytic activity due to phosphorylation by JNK1 may occur due to a conformational change disrupting the interaction between the PRR/WW motifs domain and the HECT domain and, thus exposing the HECT domain. Phosphorylation by FYN reduces interaction with JUNB and negatively controls JUN ubiquitination and degradation. Interacts directly with LDLRAD3; this interaction promotes ITCH auto-ubiquitination leading to its degradation. Post-translationally, monoubiquitinated. Autopolyubiquitinated with 'Lys-63' linkages which does not lead to protein degradation. In terms of tissue distribution, detected in uterus (at protein level). Widely expressed.

It is found in the cell membrane. The protein resides in the cytoplasm. The protein localises to the nucleus. Its subcellular location is the early endosome membrane. It localises to the endosome membrane. The enzyme catalyses S-ubiquitinyl-[E2 ubiquitin-conjugating enzyme]-L-cysteine + [acceptor protein]-L-lysine = [E2 ubiquitin-conjugating enzyme]-L-cysteine + N(6)-ubiquitinyl-[acceptor protein]-L-lysine.. It participates in protein modification; protein ubiquitination. With respect to regulation, activated by NDFIP1- and NDFIP2-binding. Activated by PI4K2A-binding. Inhibited by DTX3L-binding. Inhibited by N4BP1 binding. Acts as an E3 ubiquitin-protein ligase which accepts ubiquitin from an E2 ubiquitin-conjugating enzyme in the form of a thioester and then directly transfers the ubiquitin to targeted substrates. It catalyzes 'Lys-29'-, 'Lys-48'- and 'Lys-63'-linked ubiquitin conjugation. Involved in the control of inflammatory signaling pathways. Is an essential component of a ubiquitin-editing protein complex, comprising also TNFAIP3, TAX1BP1 and RNF11, that ensures the transient nature of inflammatory signaling pathways. Promotes the association of the complex after TNF stimulation. Once the complex is formed, TNFAIP3 deubiquitinates 'Lys-63' polyubiquitin chains on RIPK1 and catalyzes the formation of 'Lys-48'-polyubiquitin chains. This leads to RIPK1 proteasomal degradation and consequently termination of the TNF- or LPS-mediated activation of NFKB1. Ubiquitinates RIPK2 by 'Lys-63'-linked conjugation and influences NOD2-dependent signal transduction pathways. Regulates the transcriptional activity of several transcription factors involved in immune response. Ubiquitinates NFE2 by 'Lys-63' linkages and is implicated in the control of the development of hematopoietic lineages. Mediates JUN ubiquitination and degradation. Mediates JUNB ubiquitination and degradation. Critical regulator of type 2 helper T (Th2) cell cytokine production by inducing JUNB ubiquitination and degradation. Involved in the negative regulation of MAVS-dependent cellular antiviral responses. Ubiquitinates MAVS through 'Lys-48'-linked conjugation resulting in MAVS proteasomal degradation. Following ligand stimulation, regulates sorting of Wnt receptor FZD4 to the degradative endocytic pathway probably by modulating PI42KA activity. Ubiquitinates PI4K2A and negatively regulates its catalytic activity. Ubiquitinates chemokine receptor CXCR4 and regulates sorting of CXCR4 to the degradative endocytic pathway following ligand stimulation by ubiquitinating endosomal sorting complex required for transport ESCRT-0 components HGS and STAM. Targets DTX1 for lysosomal degradation and controls NOTCH1 degradation, in the absence of ligand, through 'Lys-29'-linked polyubiquitination. Ubiquitinates SNX9. Ubiquitinates MAP3K7 through 'Lys-48'-linked conjugation. Together with UBR5, involved in the regulation of apoptosis and reactive oxygen species levels through the ubiquitination and proteasomal degradation of TXNIP: catalyzes 'Lys-48'-/'Lys-63'-branched ubiquitination of TXNIP. ITCH synthesizes 'Lys-63'-linked chains, while UBR5 is branching multiple 'Lys-48'-linked chains of substrate initially modified. Mediates the antiapoptotic activity of epidermal growth factor through the ubiquitination and proteasomal degradation of p15 BID. Ubiquitinates BRAT1 and this ubiquitination is enhanced in the presence of NDFIP1. Ubiquitinates NEDD9/HEF1, resulting in proteasomal degradation of NEDD9/HEF1. This Mus musculus (Mouse) protein is E3 ubiquitin-protein ligase Itchy (Itch).